Here is a 257-residue protein sequence, read N- to C-terminus: Acetylglutamate kinase (257 aa).

Residues 43–44 (GG), Arg-65, and Asn-157 each bind substrate. Residues 180–185 (DVSGIL) and 208–210 (IIT) each bind ATP.

Belongs to the acetylglutamate kinase family. ArgB subfamily. Homodimer.

It localises to the cytoplasm. The enzyme catalyses N-acetyl-L-glutamate + ATP = N-acetyl-L-glutamyl 5-phosphate + ADP. The protein operates within amino-acid biosynthesis; L-arginine biosynthesis; N(2)-acetyl-L-ornithine from L-glutamate: step 2/4. Its function is as follows. Catalyzes the ATP-dependent phosphorylation of N-acetyl-L-glutamate. The polypeptide is Acetylglutamate kinase (Enterobacter sp. (strain 638)).